Consider the following 293-residue polypeptide: Undecaprenyl-diphosphatase (293 aa).

The next 7 helical transmembrane spans lie at 57-77 (PGVS…IVYF), 106-126 (LAIA…KLFW), 134-154 (IRSL…LALA), 172-192 (GFVV…RSGS), 212-232 (FLLG…DAFA), 239-259 (VLPL…AIDW), and 268-288 (STWI…AWWL).

The protein belongs to the UppP family.

The protein localises to the cell inner membrane. The enzyme catalyses di-trans,octa-cis-undecaprenyl diphosphate + H2O = di-trans,octa-cis-undecaprenyl phosphate + phosphate + H(+). Its function is as follows. Catalyzes the dephosphorylation of undecaprenyl diphosphate (UPP). Confers resistance to bacitracin. The polypeptide is Undecaprenyl-diphosphatase (Prochlorococcus marinus (strain MIT 9303)).